The following is a 595-amino-acid chain: Merlin (595 aa).

Ser-13 carries the post-translational modification Phosphoserine. In terms of domain architecture, FERM spans 22 to 311 (FTVRIVTMDA…GNHDLFMRRR (290 aa)). Phosphoserine; by PAK is present on Ser-518.

As to quaternary structure, interacts with NHERF1, HGS and AGAP2. Interacts with SGSM3. Interacts (via FERM domain) with MPP1. Interacts with LAYN and WWC1. Interacts with the CUL4A-RBX1-DDB1-VprBP/DCAF1 E3 ubiquitin-protein ligase complex. The unphosphorylated form interacts (via FERM domain) with VPRBP/DCAF1. Interacts (via FERM domain) with NOP53; the interaction is direct. Interacts with SCHIP1; the interaction is direct. Phosphorylation of Ser-518 inhibits nuclear localization by disrupting the intramolecular association of the FERM domain with the C-terminal tail. In terms of processing, ubiquitinated by the CUL4A-RBX1-DDB1-DCAF1/VprBP E3 ubiquitin-protein ligase complex for ubiquitination and subsequent proteasome-dependent degradation. Post-translationally, phosphorylation of Ser-518 inhibits nuclear localization by disrupting the intramolecular association of the FERM domain with the C-terminal tail. The dephosphorylation of Ser-518 favors the interaction with NOP53.

It localises to the cell membrane. Its subcellular location is the cell projection. The protein localises to the cytoplasm. The protein resides in the cytoskeleton. It is found in the nucleus. Probable regulator of the Hippo/SWH (Sav/Wts/Hpo) signaling pathway, a signaling pathway that plays a pivotal role in tumor suppression by restricting proliferation and promoting apoptosis. Along with WWC1 can synergistically induce the phosphorylation of LATS1 and LATS2 and can probably function in the regulation of the Hippo/SWH (Sav/Wts/Hpo) signaling pathway. May act as a membrane stabilizing protein. May inhibit PI3 kinase by binding to AGAP2 and impairing its stimulating activity. Suppresses cell proliferation and tumorigenesis by inhibiting the CUL4A-RBX1-DDB1-VprBP/DCAF1 E3 ubiquitin-protein ligase complex. The protein is Merlin (NF2) of Papio anubis (Olive baboon).